Here is a 70-residue protein sequence, read N- to C-terminus: Chondroitin proteoglycan 9 (70 aa).

An N-terminal signal peptide occupies residues 1 to 19 (MNFWHLLLLAVLFFVTVFG). O-linked (Xyl...) (chondroitin sulfate) serine glycosylation is found at S25 and S27.

In Caenorhabditis briggsae, this protein is Chondroitin proteoglycan 9 (cpg-9).